Reading from the N-terminus, the 173-residue chain is Crossover junction endodeoxyribonuclease RuvC (173 aa).

Active-site residues include aspartate 8, glutamate 67, and aspartate 139. Residues aspartate 8, glutamate 67, and aspartate 139 each contribute to the Mg(2+) site.

This sequence belongs to the RuvC family. In terms of assembly, homodimer which binds Holliday junction (HJ) DNA. The HJ becomes 2-fold symmetrical on binding to RuvC with unstacked arms; it has a different conformation from HJ DNA in complex with RuvA. In the full resolvosome a probable DNA-RuvA(4)-RuvB(12)-RuvC(2) complex forms which resolves the HJ. It depends on Mg(2+) as a cofactor.

It is found in the cytoplasm. The catalysed reaction is Endonucleolytic cleavage at a junction such as a reciprocal single-stranded crossover between two homologous DNA duplexes (Holliday junction).. Its function is as follows. The RuvA-RuvB-RuvC complex processes Holliday junction (HJ) DNA during genetic recombination and DNA repair. Endonuclease that resolves HJ intermediates. Cleaves cruciform DNA by making single-stranded nicks across the HJ at symmetrical positions within the homologous arms, yielding a 5'-phosphate and a 3'-hydroxyl group; requires a central core of homology in the junction. The consensus cleavage sequence is 5'-(A/T)TT(C/G)-3'. Cleavage occurs on the 3'-side of the TT dinucleotide at the point of strand exchange. HJ branch migration catalyzed by RuvA-RuvB allows RuvC to scan DNA until it finds its consensus sequence, where it cleaves and resolves the cruciform DNA. This chain is Crossover junction endodeoxyribonuclease RuvC, found in Proteus mirabilis (strain HI4320).